Reading from the N-terminus, the 234-residue chain is Small ribosomal subunit protein uS3 (234 aa).

The region spanning 39–107 (IRKFLKKELY…EVSINIKEVK (69 aa)) is the KH type-2 domain.

This sequence belongs to the universal ribosomal protein uS3 family. Part of the 30S ribosomal subunit. Forms a tight complex with proteins S10 and S14.

Its function is as follows. Binds the lower part of the 30S subunit head. Binds mRNA in the 70S ribosome, positioning it for translation. This chain is Small ribosomal subunit protein uS3, found in Helicobacter pylori (strain G27).